A 360-amino-acid polypeptide reads, in one-letter code: MIIYATEVQTINSFVRLESLKEVYGFIWIFVPIFSLVLGIITGVLVIVWLEREISAGIQQRIGPEYAGPLGILQALADGTKLLFKEDLRPSRGNTPLFSIGPSIAVISILLSYSIIPFSNHLVLADLNIGIFLWIAISSIAPIGLLMSGYGSNNKYSFLGGLRAAAQSISYEIPLTLCVLSISLLSNSLSTVDIVEAQSKYGFWGWNLWRQPIGFIIFLISSLAECERLPFDLPEAEEELIAGYQTEYSGIKFGLFYVASYLNLLISSLFVTVLYLGGWNISIPHISILKLFEGDQIFGTTIGIFITLAKTYLFLFISIATRWTLPRLRMDQLLNLGWKFLLPISLGNLLLTTSFQLFSL.

8 consecutive transmembrane segments (helical) span residues 27 to 47 (IWIF…VLVI), 98 to 118 (FSIG…IIPF), 129 to 149 (IGIF…LMSG), 165 to 185 (AAQS…ISLL), 203 to 223 (FWGW…ISSL), 253 to 273 (FGLF…FVTV), 297 to 317 (IFGT…FLFI), and 340 to 360 (FLLP…LFSL).

This sequence belongs to the complex I subunit 1 family. In terms of assembly, NDH is composed of at least 16 different subunits, 5 of which are encoded in the nucleus.

Its subcellular location is the plastid. It localises to the chloroplast thylakoid membrane. It carries out the reaction a plastoquinone + NADH + (n+1) H(+)(in) = a plastoquinol + NAD(+) + n H(+)(out). The enzyme catalyses a plastoquinone + NADPH + (n+1) H(+)(in) = a plastoquinol + NADP(+) + n H(+)(out). Its function is as follows. NDH shuttles electrons from NAD(P)H:plastoquinone, via FMN and iron-sulfur (Fe-S) centers, to quinones in the photosynthetic chain and possibly in a chloroplast respiratory chain. The immediate electron acceptor for the enzyme in this species is believed to be plastoquinone. Couples the redox reaction to proton translocation, and thus conserves the redox energy in a proton gradient. The sequence is that of NAD(P)H-quinone oxidoreductase subunit 1, chloroplastic from Lobularia maritima (Sweet alyssum).